A 110-amino-acid chain; its full sequence is Ribonuclease P protein component 4 (110 aa).

Cysteine 65, cysteine 68, cysteine 94, and cysteine 97 together coordinate Zn(2+).

This sequence belongs to the eukaryotic/archaeal RNase P protein component 4 family. In terms of assembly, consists of a catalytic RNA component and at least 4-5 protein subunits. Requires Zn(2+) as cofactor.

The protein localises to the cytoplasm. It catalyses the reaction Endonucleolytic cleavage of RNA, removing 5'-extranucleotides from tRNA precursor.. Functionally, part of ribonuclease P, a protein complex that generates mature tRNA molecules by cleaving their 5'-ends. This is Ribonuclease P protein component 4 from Methanococcus maripaludis (strain C6 / ATCC BAA-1332).